Consider the following 1190-residue polypeptide: Isoleucine--tRNA ligase, cytoplasmic (1190 aa).

A 'HIGH' region motif is present at residues 49-59 (PFATGLPHYGH). The disordered stretch occupies residues 271 to 299 (DKPKAKLSNGPAGDTKKANPKAKGAKPES). The 'KMSKS' region motif lies at 632–636 (KMAKK). K635 contributes to the ATP binding site.

It belongs to the class-I aminoacyl-tRNA synthetase family.

It is found in the cytoplasm. The protein resides in the cytosol. The catalysed reaction is tRNA(Ile) + L-isoleucine + ATP = L-isoleucyl-tRNA(Ile) + AMP + diphosphate. The polypeptide is Isoleucine--tRNA ligase, cytoplasmic (Arabidopsis thaliana (Mouse-ear cress)).